We begin with the raw amino-acid sequence, 284 residues long: D-tagatose-1,6-bisphosphate aldolase subunit GatY (284 aa).

Catalysis depends on D82, which acts as the Proton donor. The Zn(2+) site is built by H83 and H180. G181 is a dihydroxyacetone phosphate binding site. Position 208 (H208) interacts with Zn(2+). Residues 209–211 and 230–233 contribute to the dihydroxyacetone phosphate site; these read GAS and NVAT.

The protein belongs to the class II fructose-bisphosphate aldolase family. TagBP aldolase GatY subfamily. As to quaternary structure, forms a complex with GatZ. Zn(2+) is required as a cofactor.

The enzyme catalyses D-tagatofuranose 1,6-bisphosphate = D-glyceraldehyde 3-phosphate + dihydroxyacetone phosphate. The protein operates within carbohydrate metabolism; D-tagatose 6-phosphate degradation; D-glyceraldehyde 3-phosphate and glycerone phosphate from D-tagatose 6-phosphate: step 2/2. Functionally, catalytic subunit of the tagatose-1,6-bisphosphate aldolase GatYZ, which catalyzes the reversible aldol condensation of dihydroxyacetone phosphate (DHAP or glycerone-phosphate) with glyceraldehyde 3-phosphate (G3P) to produce tagatose 1,6-bisphosphate (TBP). Requires GatZ subunit for full activity and stability. Is involved in the catabolism of galactitol. This is D-tagatose-1,6-bisphosphate aldolase subunit GatY (gatY) from Escherichia coli.